A 171-amino-acid chain; its full sequence is Ribosome maturation factor RimM (171 aa).

The PRC barrel domain maps to 97-170 (EGEYYYHEVI…QVTIHVMEGL (74 aa)).

Belongs to the RimM family. In terms of assembly, binds ribosomal protein uS19.

It localises to the cytoplasm. Its function is as follows. An accessory protein needed during the final step in the assembly of 30S ribosomal subunit, possibly for assembly of the head region. Essential for efficient processing of 16S rRNA. May be needed both before and after RbfA during the maturation of 16S rRNA. It has affinity for free ribosomal 30S subunits but not for 70S ribosomes. This is Ribosome maturation factor RimM from Bacillus cytotoxicus (strain DSM 22905 / CIP 110041 / 391-98 / NVH 391-98).